The primary structure comprises 351 residues: MSDIMSNFSWLYGKPVATGKLKQLPEHFIVKEILGFEFTGSGEHLMVKIRKTGENTKYVANELAKFCGVKSKNVSWAGLKDRHAVTEQWLSVQVANSDELSFAKFEATHPGVEILEVTRHNKKLRPGDLQGNQFQVIATEVTDIEDVLARLEKVKLTGVPNYFGSQRFGHEGNNVNEARRWGRDNVRTRDNSKRSFYLSAARSWIFNHIVSQRITEGYFSQPVDGDILLDRNDRIVNENVTSEESIQKIQNGELSITAALAGDNQLPTTGTALTLEQPHLDAEPDLMALIRGNRMRHERRAIELHPENLTWSAEGDTLTLNFSLTSGSFATVIVRELLQEIEVERTYSSND.

The active-site Nucleophile is the aspartate 81. One can recognise a TRUD domain in the interval 158–304; the sequence is GVPNYFGSQR…MRHERRAIEL (147 aa).

This sequence belongs to the pseudouridine synthase TruD family.

It carries out the reaction uridine(13) in tRNA = pseudouridine(13) in tRNA. In terms of biological role, responsible for synthesis of pseudouridine from uracil-13 in transfer RNAs. This is tRNA pseudouridine synthase D from Aliivibrio fischeri (strain MJ11) (Vibrio fischeri).